The following is a 430-amino-acid chain: Isochorismate synthase MenF (430 aa).

Lys187 (proton acceptor) is an active-site residue. Catalysis depends on Glu237, which acts as the Proton donor. Mg(2+) contacts are provided by Glu281 and Glu414.

Belongs to the isochorismate synthase family. Mg(2+) serves as cofactor.

It carries out the reaction chorismate = isochorismate. The protein operates within quinol/quinone metabolism; 1,4-dihydroxy-2-naphthoate biosynthesis; 1,4-dihydroxy-2-naphthoate from chorismate: step 1/7. Its pathway is quinol/quinone metabolism; menaquinone biosynthesis. Catalyzes the conversion of chorismate to isochorismate. The chain is Isochorismate synthase MenF from Haemophilus influenzae (strain ATCC 51907 / DSM 11121 / KW20 / Rd).